We begin with the raw amino-acid sequence, 124 residues long: Large ribosomal subunit protein bL36m (124 aa).

It belongs to the bacterial ribosomal protein bL36 family. In terms of assembly, component of the mitochondrial large ribosomal subunit (mt-LSU). Mature N.crassa 74S mitochondrial ribosomes consist of a small (37S) and a large (54S) subunit. The 37S small subunit contains a 16S ribosomal RNA (16S mt-rRNA) and 32 different proteins. The 54S large subunit contains a 23S rRNA (23S mt-rRNA) and 42 different proteins. bL36m has a zinc binding site.

The protein resides in the mitochondrion. Functionally, component of the mitochondrial ribosome (mitoribosome), a dedicated translation machinery responsible for the synthesis of mitochondrial genome-encoded proteins, including at least some of the essential transmembrane subunits of the mitochondrial respiratory chain. The mitoribosomes are attached to the mitochondrial inner membrane and translation products are cotranslationally integrated into the membrane. The chain is Large ribosomal subunit protein bL36m (rtc6) from Neurospora crassa (strain ATCC 24698 / 74-OR23-1A / CBS 708.71 / DSM 1257 / FGSC 987).